Consider the following 372-residue polypeptide: Methenyltetrahydrofolate synthase domain-containing protein (372 aa).

Residues 246-258 (KQAGKDVTLRDEP) show a composition bias toward basic and acidic residues. Residues 246 to 289 (KQAGKDVTLRDEPGSQQPAPGPIRRPQDRPQTGSRGGSRSPLQG) form a disordered region. The RRM domain maps to 296 to 369 (ATVCVGNLPF…NALRVSLGQQ (74 aa)).

The sequence is that of Methenyltetrahydrofolate synthase domain-containing protein (Mthfsd) from Mus musculus (Mouse).